A 202-amino-acid polypeptide reads, in one-letter code: Transmembrane gamma-carboxyglutamic acid protein 2 (202 aa).

Positions Met-1–Ser-23 are cleaved as a signal peptide. Residues Glu-24 to Arg-49 constitute a propeptide that is removed on maturation. Residues Ala-50 to Tyr-96 form the Gla domain. At Ala-50–Ser-109 the chain is on the extracellular side. Residues Cys-67 and Cys-72 are joined by a disulfide bond. Position 70 is a 4-carboxyglutamate (Glu-70). Residues Leu-110–Trp-130 form a helical membrane-spanning segment. Over Tyr-131–His-202 the chain is Cytoplasmic. A disordered region spans residues Cys-143–His-202. Over residues Pro-158–Leu-175 the composition is skewed to pro residues. An LPXY motif; mediates binding to WW domain-containing proteins motif is present at residues Leu-175 to Tyr-178. The PPXY motif; mediates binding to WW domain-containing proteins motif lies at Pro-192–Tyr-195.

Interacts with NEDD4. Interacts (via cytoplasmic domain) with transcriptional coactivator YAP1. Gamma-carboxyglutamate residues are formed by vitamin K dependent carboxylation. These residues are essential for the binding of calcium. As to expression, widely expressed with highest levels in kidney. Also highly expressed in the thyroid.

It is found in the cell membrane. This chain is Transmembrane gamma-carboxyglutamic acid protein 2, found in Homo sapiens (Human).